Consider the following 547-residue polypeptide: (R)-citramalate synthase (547 aa).

In terms of domain architecture, Pyruvate carboxyltransferase spans 8–278 (LWLYDTTLRD…YDCIEPEKLA (271 aa)).

Belongs to the alpha-IPM synthase/homocitrate synthase family.

The catalysed reaction is pyruvate + acetyl-CoA + H2O = (3R)-citramalate + CoA + H(+). It participates in amino-acid biosynthesis; L-isoleucine biosynthesis; 2-oxobutanoate from pyruvate: step 1/3. Catalyzes the condensation of pyruvate and acetyl-coenzyme A to form (R)-citramalate. The chain is (R)-citramalate synthase from Synechocystis sp. (strain ATCC 27184 / PCC 6803 / Kazusa).